The following is a 310-amino-acid chain: Capsid assembly scaffolding protein (310 aa).

The disordered stretch occupies residues 46-102; sequence VLSDEPTSHNDDPYAAGVDPFADGEDDEGRIQVRISEDGNEAGFDTDGDNSEVETEG. Positions 83–102 are enriched in acidic residues; it reads DGNEAGFDTDGDNSEVETEG.

This sequence belongs to the T7likevirus capsid assembly scaffolding protein family.

In terms of biological role, scaffolding protein involved in the icosahedric procapsid assembly. Coassembles with the capsid proteins to form the procapsid, in which the scaffolding protein is found within the external shell of icosahedrally arranged capsid protein subunits. In a subsequent step the scaffolding protein molecules are released from the procapsid. Facilitates assembly by binding to gp10 hexamers but not the pentamers and locking them into a morphogenically correct conformation. In Enterobacteria phage T3 (Bacteriophage T3), this protein is Capsid assembly scaffolding protein (9).